The chain runs to 36 residues: Photosystem I reaction center subunit VIII (36 aa).

A helical membrane pass occupies residues 10–29 (FVPLVGLVFPAIAMASLFLY).

The protein belongs to the PsaI family.

Its subcellular location is the plastid. The protein resides in the chloroplast thylakoid membrane. Functionally, may help in the organization of the PsaL subunit. This Oryza nivara (Indian wild rice) protein is Photosystem I reaction center subunit VIII.